Reading from the N-terminus, the 274-residue chain is Diaminopimelate epimerase (274 aa).

Positions 11, 44, and 64 each coordinate substrate. The active-site Proton donor is Cys-73. Substrate-binding positions include 74–75, Asn-157, Asn-190, and 208–209; these read GN and ER. Cys-217 acts as the Proton acceptor in catalysis. 218–219 provides a ligand contact to substrate; sequence GS.

It belongs to the diaminopimelate epimerase family. In terms of assembly, homodimer.

The protein localises to the cytoplasm. It carries out the reaction (2S,6S)-2,6-diaminopimelate = meso-2,6-diaminopimelate. It functions in the pathway amino-acid biosynthesis; L-lysine biosynthesis via DAP pathway; DL-2,6-diaminopimelate from LL-2,6-diaminopimelate: step 1/1. In terms of biological role, catalyzes the stereoinversion of LL-2,6-diaminopimelate (L,L-DAP) to meso-diaminopimelate (meso-DAP), a precursor of L-lysine and an essential component of the bacterial peptidoglycan. The sequence is that of Diaminopimelate epimerase from Histophilus somni (strain 2336) (Haemophilus somnus).